Consider the following 313-residue polypeptide: Flagellin (313 aa).

2 coiled-coil regions span residues 5–33 (INTN…ERLS) and 97–117 (VQSE…KEVT). A run of 4 repeats spans residues 179–197 (KEAV…VPAD), 199–217 (KNGV…VKAQ), 255–259 (VNNLN), and 262–266 (VNNLS). A 2 X 19 AA approximate tandem repeats region spans residues 179-217 (KEAVAAKPAVPAQPAVPADPKNGVAAKPAVPAQPEVKAQ). The span at 190 to 199 (AQPAVPADPK) shows a compositional bias: low complexity. The interval 190–211 (AQPAVPADPKNGVAAKPAVPAQ) is disordered. Residues 252-298 (ESTVNNLNNTVNNLSAARSRIEDADYAVEVSNMSRGQILQQAGTSVL) are a coiled coil. Residues 255-266 (VNNLNNTVNNLS) form a 2 X 5 AA approximate repeats of V-N-N-L-N region.

The protein belongs to the bacterial flagellin family.

It is found in the secreted. The protein resides in the bacterial flagellum. Its function is as follows. Flagellin is the subunit protein which polymerizes to form the filaments of bacterial flagella. The polypeptide is Flagellin (fliC) (Xenorhabdus nematophila (Achromobacter nematophilus)).